A 363-amino-acid polypeptide reads, in one-letter code: Small ribosomal subunit biogenesis GTPase RsgA (363 aa).

Positions histidine 112–leucine 268 constitute a CP-type G domain. GTP-binding positions include threonine 157–aspartate 160 and glycine 210–threonine 218. Zn(2+)-binding residues include cysteine 291, cysteine 296, histidine 298, and cysteine 304. Residues arginine 340–arginine 363 form a disordered region.

This sequence belongs to the TRAFAC class YlqF/YawG GTPase family. RsgA subfamily. As to quaternary structure, monomer. Associates with 30S ribosomal subunit, binds 16S rRNA. Zn(2+) is required as a cofactor.

It is found in the cytoplasm. Its function is as follows. One of several proteins that assist in the late maturation steps of the functional core of the 30S ribosomal subunit. Helps release RbfA from mature subunits. May play a role in the assembly of ribosomal proteins into the subunit. Circularly permuted GTPase that catalyzes slow GTP hydrolysis, GTPase activity is stimulated by the 30S ribosomal subunit. The sequence is that of Small ribosomal subunit biogenesis GTPase RsgA from Xanthomonas oryzae pv. oryzae (strain MAFF 311018).